A 508-amino-acid polypeptide reads, in one-letter code: Phenylalanine--tRNA ligase alpha subunit (508 aa).

Residue Ala2 is modified to N-acetylalanine. Thr190 carries the post-translational modification Phosphothreonine. 2 positions are modified to phosphoserine: Ser193 and Ser301. Residue Lys311 is modified to N6-acetyllysine. L-phenylalanine contacts are provided by residues Thr329, 372-374 (QIE), and Tyr412. Glu414 serves as a coordination point for Mg(2+). L-phenylalanine is bound at residue Phe438.

This sequence belongs to the class-II aminoacyl-tRNA synthetase family. Phe-tRNA synthetase alpha subunit type 2 subfamily. As to quaternary structure, heterotetramer; dimer of two heterodimers formed by FARSA and FARSB.

The protein resides in the cytoplasm. The enzyme catalyses tRNA(Phe) + L-phenylalanine + ATP = L-phenylalanyl-tRNA(Phe) + AMP + diphosphate + H(+). In Homo sapiens (Human), this protein is Phenylalanine--tRNA ligase alpha subunit (FARSA).